The following is a 563-amino-acid chain: 4-hydroxy-7-methoxy-3-oxo-3,4-dihydro-2H-1,4-benzoxazin-2-yl glucoside beta-D-glucosidase 2, chloroplastic (563 aa).

Residues 1 to 51 (MAPLLAAAMNHAAHPVLRSHLGPNNESFSRHHLSSSPQSSKRRFNLSFTPR) constitute a chloroplast transit peptide. The segment at 17-43 (LRSHLGPNNESFSRHHLSSSPQSSKRR) is disordered. A beta-D-glucoside is bound by residues Q89, H193, and 241–242 (NE). Catalysis depends on E242, which acts as the Proton donor. Residues C261 and C267 are joined by a disulfide bond. Positions 322–358 (SFLDEQAKERSMDINLGWFLEPVVRGDYPFSMRSLAR) are dimerization. Y384 is a binding site for a beta-D-glucoside. Dimerization regions lie at residues 391–402 (HIDISPKYSPVL) and 447–450 (KYGN). A beta-D-glucoside contacts are provided by residues E457, W508, 515–516 (EW), and Y524. E457 (nucleophile) is an active-site residue.

Belongs to the glycosyl hydrolase 1 family. In terms of assembly, homo- and heterodimer. As to expression, expressed in leaves only starting at day 6 after germination.

Its subcellular location is the plastid. It is found in the chloroplast. It carries out the reaction Hydrolysis of terminal, non-reducing beta-D-glucosyl residues with release of beta-D-glucose.. It catalyses the reaction DIMBOA beta-D-glucoside + H2O = DIMBOA + D-glucose. The enzyme catalyses DIBOA beta-D-glucoside + H2O = DIBOA + D-glucose. Functionally, beta-glucosidase acting poorly on artificial aryl beta-glucosides. Has no activity toward the chromogenic substrate 6-bromo-2-naphthyl-beta-D-glucoside (6BNGlc). This is 4-hydroxy-7-methoxy-3-oxo-3,4-dihydro-2H-1,4-benzoxazin-2-yl glucoside beta-D-glucosidase 2, chloroplastic (GLU2) from Zea mays (Maize).